We begin with the raw amino-acid sequence, 379 residues long: UDP-4-amino-4-deoxy-L-arabinose--oxoglutarate aminotransferase (379 aa).

Lys-182 is subject to N6-(pyridoxal phosphate)lysine.

It belongs to the DegT/DnrJ/EryC1 family. ArnB subfamily. As to quaternary structure, homodimer. Pyridoxal 5'-phosphate serves as cofactor.

It carries out the reaction UDP-4-amino-4-deoxy-beta-L-arabinose + 2-oxoglutarate = UDP-beta-L-threo-pentopyranos-4-ulose + L-glutamate. It functions in the pathway nucleotide-sugar biosynthesis; UDP-4-deoxy-4-formamido-beta-L-arabinose biosynthesis; UDP-4-deoxy-4-formamido-beta-L-arabinose from UDP-alpha-D-glucuronate: step 2/3. The protein operates within bacterial outer membrane biogenesis; lipopolysaccharide biosynthesis. Its function is as follows. Catalyzes the conversion of UDP-4-keto-arabinose (UDP-Ara4O) to UDP-4-amino-4-deoxy-L-arabinose (UDP-L-Ara4N). The modified arabinose is attached to lipid A and is required for resistance to polymyxin and cationic antimicrobial peptides. The sequence is that of UDP-4-amino-4-deoxy-L-arabinose--oxoglutarate aminotransferase from Salmonella choleraesuis (strain SC-B67).